A 458-amino-acid chain; its full sequence is tRNA modification GTPase MnmE (458 aa).

Arginine 26, glutamate 88, and arginine 127 together coordinate (6S)-5-formyl-5,6,7,8-tetrahydrofolate. A TrmE-type G domain is found at 224–378 (GLSTAIIGRP…IEDRINQLFF (155 aa)). K(+) is bound at residue asparagine 234. Residues 234–239 (NVGKSS), 253–259 (TDIAGTT), and 278–281 (DTAG) each bind GTP. Serine 238 contributes to the Mg(2+) binding site. Threonine 253, isoleucine 255, and threonine 258 together coordinate K(+). Threonine 259 contributes to the Mg(2+) binding site. Residue lysine 458 participates in (6S)-5-formyl-5,6,7,8-tetrahydrofolate binding.

The protein belongs to the TRAFAC class TrmE-Era-EngA-EngB-Septin-like GTPase superfamily. TrmE GTPase family. Homodimer. Heterotetramer of two MnmE and two MnmG subunits. It depends on K(+) as a cofactor.

It is found in the cytoplasm. In terms of biological role, exhibits a very high intrinsic GTPase hydrolysis rate. Involved in the addition of a carboxymethylaminomethyl (cmnm) group at the wobble position (U34) of certain tRNAs, forming tRNA-cmnm(5)s(2)U34. The chain is tRNA modification GTPase MnmE from Streptococcus pyogenes serotype M1.